The chain runs to 219 residues: Large ribosomal subunit protein uL3 (219 aa).

The protein belongs to the universal ribosomal protein uL3 family. In terms of assembly, part of the 50S ribosomal subunit. Forms a cluster with proteins L14 and L19.

In terms of biological role, one of the primary rRNA binding proteins, it binds directly near the 3'-end of the 23S rRNA, where it nucleates assembly of the 50S subunit. This Salinispora arenicola (strain CNS-205) protein is Large ribosomal subunit protein uL3.